Consider the following 141-residue polypeptide: Large ribosomal subunit protein uL11 (141 aa).

It belongs to the universal ribosomal protein uL11 family. In terms of assembly, part of the ribosomal stalk of the 50S ribosomal subunit. Interacts with L10 and the large rRNA to form the base of the stalk. L10 forms an elongated spine to which L12 dimers bind in a sequential fashion forming a multimeric L10(L12)X complex. One or more lysine residues are methylated.

Forms part of the ribosomal stalk which helps the ribosome interact with GTP-bound translation factors. In Aliarcobacter butzleri (strain RM4018) (Arcobacter butzleri), this protein is Large ribosomal subunit protein uL11.